The sequence spans 309 residues: Methionyl-tRNA formyltransferase (309 aa).

109-112 (SLLP) lines the (6S)-5,6,7,8-tetrahydrofolate pocket.

Belongs to the Fmt family.

The catalysed reaction is L-methionyl-tRNA(fMet) + (6R)-10-formyltetrahydrofolate = N-formyl-L-methionyl-tRNA(fMet) + (6S)-5,6,7,8-tetrahydrofolate + H(+). Functionally, attaches a formyl group to the free amino group of methionyl-tRNA(fMet). The formyl group appears to play a dual role in the initiator identity of N-formylmethionyl-tRNA by promoting its recognition by IF2 and preventing the misappropriation of this tRNA by the elongation apparatus. This is Methionyl-tRNA formyltransferase from Clostridioides difficile (strain 630) (Peptoclostridium difficile).